Consider the following 205-residue polypeptide: 2-dehydro-3-deoxy-6-phosphogalactonate aldolase (205 aa).

Arginine 14 is a binding site for 2-dehydro-3-deoxy-6-phospho-D-galactonate. Catalysis depends on glutamate 37, which acts as the Proton donor/acceptor. Threonine 66, lysine 126, glycine 156, glycine 176, and serine 177 together coordinate 2-dehydro-3-deoxy-6-phospho-D-galactonate. Lysine 126 (schiff-base intermediate with substrate) is an active-site residue.

Belongs to the KHG/KDPG aldolase family. In terms of assembly, homotrimer.

The enzyme catalyses 2-dehydro-3-deoxy-6-phospho-D-galactonate = D-glyceraldehyde 3-phosphate + pyruvate. Its pathway is carbohydrate acid metabolism; D-galactonate degradation; D-glyceraldehyde 3-phosphate and pyruvate from D-galactonate: step 3/3. Functionally, involved in the degradation of galactose via the DeLey-Doudoroff pathway. Catalyzes the reversible, stereospecific retro-aldol cleavage of 2-keto-3-deoxy-6-phosphogalactonate (KDPGal) to pyruvate and D-glyceraldehyde-3-phosphate. In the synthetic direction, it catalyzes the addition of pyruvate to electrophilic aldehydes with re-facial selectivity. It can use a limited number of aldehyde substrates, including D-glyceraldehyde-3-phosphate (natural substrate), D-glyceraldehyde, glycolaldehyde, 2-pyridinecarboxaldehyde, D-ribose, D-erythrose and D-threose. It efficiently catalyzes aldol addition only using pyruvate as the nucleophilic component and accepts both stereochemical configurations at C2 of the electrophile. This chain is 2-dehydro-3-deoxy-6-phosphogalactonate aldolase (dgoA), found in Escherichia coli (strain K12).